The following is a 92-amino-acid chain: Small ribosomal subunit protein uS19 (92 aa).

Belongs to the universal ribosomal protein uS19 family.

In terms of biological role, protein S19 forms a complex with S13 that binds strongly to the 16S ribosomal RNA. The chain is Small ribosomal subunit protein uS19 from Vibrio parahaemolyticus serotype O3:K6 (strain RIMD 2210633).